The following is a 639-amino-acid chain: Protein sly1 homolog (639 aa).

Tandem repeats lie at residues 85–121, 203–245, 423–460, and 464–500. Residues 85 to 500 form a 4 X approximate repeats region; it reads DENLDRIQQD…QATQYEGGGT (416 aa).

It belongs to the STXBP/unc-18/SEC1 family. In embryos, from stage 14, expression is seen in posterior midgut, esophagus and salivary glands. No expression is seen in larval imaginal disks.

Its subcellular location is the cytoplasm. The protein localises to the membrane. Functionally, non-vital for development. This chain is Protein sly1 homolog (Slh), found in Drosophila melanogaster (Fruit fly).